A 381-amino-acid chain; its full sequence is MSSVLRLFKIGAPVPNVRVHQLDASLLDAELVDLLKNQLFKGFTNFHPEFRDKYESELVLALKLILFKLTVWDHAITYGGKLQNLKFIDSRHSSKLQIQPSVIQKLGYGILVVGGGYLWSKIEGYLLARSEDDVATDGTSVRGASAARGALKVANFASLLYSAATLGNFVAFLYTGRYATVIMRLLRIRLVPSQRTSSRQVSYEFQNRQLVWNAFTEFLIFILPLLQLPKLKRRIERKLQSLNVTRVGNVEEASEGELAHLPQKTCAICFRDEEEQEGGGGASHYSTDVTNPYQADCGHVYCYVCLVTKLAQGDGDGWNCYRCAKQVQKMKPWVDVDEAAVVGAAEMHEKVDVIEHAEDNEQEEEEFDDDDEDSNFQLMKD.

Residues 1–17 lie on the Peroxisomal matrix side of the membrane; sequence MSSVLRLFKIGAPVPNV. The chain crosses the membrane as a helical span at residues 18-44; sequence RVHQLDASLLDAELVDLLKNQLFKGFT. The Cytoplasmic portion of the chain corresponds to 45-50; sequence NFHPEF. A helical membrane pass occupies residues 51-76; sequence RDKYESELVLALKLILFKLTVWDHAI. Over 77–100 the chain is Peroxisomal matrix; the sequence is TYGGKLQNLKFIDSRHSSKLQIQP. The helical transmembrane segment at 101–127 threads the bilayer; it reads SVIQKLGYGILVVGGGYLWSKIEGYLL. At 128–140 the chain is on the cytoplasmic side; the sequence is ARSEDDVATDGTS. A helical transmembrane segment spans residues 141-175; sequence VRGASAARGALKVANFASLLYSAATLGNFVAFLYT. The Peroxisomal matrix segment spans residues 176-202; it reads GRYATVIMRLLRIRLVPSQRTSSRQVS. Residues 203–226 form a helical membrane-spanning segment; that stretch reads YEFQNRQLVWNAFTEFLIFILPLL. Residues 227–381 are Cytoplasmic-facing; sequence QLPKLKRRIE…EDSNFQLMKD (155 aa). 8 residues coordinate Zn(2+): Cys266, Cys269, Cys297, His299, Cys302, Cys305, Cys320, and Cys323. The segment at 266–324 adopts an RING-type zinc-finger fold; the sequence is CAICFRDEEEQEGGGGASHYSTDVTNPYQADCGHVYCYVCLVTKLAQGDGDGWNCYRCA. The disordered stretch occupies residues 355-381; it reads EHAEDNEQEEEEFDDDDEDSNFQLMKD. A compositionally biased stretch (acidic residues) spans 360–374; that stretch reads NEQEEEEFDDDDEDS.

It belongs to the pex2/pex10/pex12 family. In terms of assembly, component of the PEX2-PEX10-PEX12 retrotranslocation channel, composed of PEX2, PEX10 and PEX12.

The protein localises to the peroxisome membrane. The enzyme catalyses [E2 ubiquitin-conjugating enzyme]-S-ubiquitinyl-L-cysteine + [acceptor protein]-L-cysteine = [E2 ubiquitin-conjugating enzyme]-L-cysteine + [acceptor protein]-S-ubiquitinyl-L-cysteine.. It participates in protein modification; protein ubiquitination. Functionally, E3 ubiquitin-protein ligase component of a retrotranslocation channel required for peroxisome organization by mediating export of the PEX5 receptor from peroxisomes to the cytosol, thereby promoting PEX5 recycling. The retrotranslocation channel is composed of PEX2, PEX10 and PEX12; each subunit contributing transmembrane segments that coassemble into an open channel that specifically allows the passage of PEX5 through the peroxisomal membrane. PEX2 also regulates peroxisome organization by acting as a E3 ubiquitin-protein ligase. PEX2 ubiquitinates PEX5 during its passage through the retrotranslocation channel: catalyzes monoubiquitination of PEX5 at 'Cys-6', a modification that acts as a signal for PEX5 extraction into the cytosol. The chain is Peroxisomal biogenesis factor 2 (PEX2) from Yarrowia lipolytica (strain CLIB 122 / E 150) (Yeast).